Here is a 316-residue protein sequence, read N- to C-terminus: Olfactory receptor 10A7 (316 aa).

The Extracellular segment spans residues 1 to 25 (MICENHTRVTEFILLGFTNNPEMQV). An N-linked (GlcNAc...) asparagine glycan is attached at N5. Residues 26 to 46 (SLFIFFLAIYTVTLLGNFLIV) traverse the membrane as a helical segment. At 47–54 (TVTSVDLA) the chain is on the cytoplasmic side. A helical transmembrane segment spans residues 55-75 (LQTPMYFFLQNLSLLEVCFTL). Over 76–99 (VMVPKMLVDLVSPRKIISFVGCGT) the chain is Extracellular. A helical membrane pass occupies residues 100–120 (QMYFFFFFGSSECFLLSMMAY). Residues 121 to 139 (DRFVAICNPLHYSVIMNRS) are Cytoplasmic-facing. A helical transmembrane segment spans residues 140-160 (LCLWMAIGSWMSGVPVSMLQT). Residues 161–197 (AWMMALPFCGPNAVDHFFCDGPPVLKLVTVDTTMYEM) are Extracellular-facing. Residues 198-217 (QALASTLLFIMFPFCLILVS) traverse the membrane as a helical segment. Residues 218–237 (YTRIIITILRMSSATGRQKA) are Cytoplasmic-facing. A helical membrane pass occupies residues 238–258 (FSTCSSHLIVVSLFYGTASLT). Residues 259–271 (YLRPKSNQSPESK) lie on the Extracellular side of the membrane. A helical membrane pass occupies residues 272 to 292 (KLVSLSYTVITPMLNPIIYGL). The Cytoplasmic segment spans residues 293 to 316 (RNNEVKGAVKRTITQKVLQKLDVF).

Belongs to the G-protein coupled receptor 1 family.

The protein localises to the cell membrane. Functionally, odorant receptor. The polypeptide is Olfactory receptor 10A7 (OR10A7) (Homo sapiens (Human)).